We begin with the raw amino-acid sequence, 295 residues long: 33 kDa chaperonin (295 aa).

2 cysteine pairs are disulfide-bonded: cysteine 238–cysteine 240 and cysteine 271–cysteine 274.

Belongs to the HSP33 family. Post-translationally, under oxidizing conditions two disulfide bonds are formed involving the reactive cysteines. Under reducing conditions zinc is bound to the reactive cysteines and the protein is inactive.

The protein resides in the cytoplasm. In terms of biological role, redox regulated molecular chaperone. Protects both thermally unfolding and oxidatively damaged proteins from irreversible aggregation. Plays an important role in the bacterial defense system toward oxidative stress. This Clostridium botulinum (strain Alaska E43 / Type E3) protein is 33 kDa chaperonin.